Here is a 360-residue protein sequence, read N- to C-terminus: Uptake hydrogenase small subunit (360 aa).

A signal peptide (tat-type signal) is located at residues 1-46 (MATAETFYDVIRRQGITRRSFTKFCSLTAASLGFGPGAATAMAEAL). [4Fe-4S] cluster-binding residues include Cys62, Cys65, Cys160, Cys194, His232, Cys235, Cys260, and Cys266. Cys275, Cys294, and Cys297 together coordinate [3Fe-4S] cluster.

The protein belongs to the [NiFe]/[NiFeSe] hydrogenase small subunit family. As to quaternary structure, heterodimer of a large and a small subunit. [4Fe-4S] cluster serves as cofactor. It depends on [3Fe-4S] cluster as a cofactor. Post-translationally, predicted to be exported by the Tat system. The position of the signal peptide cleavage has not been experimentally proven.

The protein resides in the cell membrane. The enzyme catalyses H2 + A = AH2. This enzyme recycles the H(2) produced by nitrogenase to increase the production of ATP and to protect nitrogenase against inhibition or damage by O(2) under carbon- or phosphate-limited conditions. In Rhizobium leguminosarum bv. viciae, this protein is Uptake hydrogenase small subunit (hupA).